We begin with the raw amino-acid sequence, 211 residues long: MAKLKVIQFDGSFKGEIQPANHLLLKKAVIQPVFDAILLEQAACRQGTHSTLTKGEVSGGGKKPYKQKHTGKARQGSIRNPHYVGGGVVFGPKPNRNYKLKLNKKAYQLALTSAFAQKLNNNQVIVAEAKLFEQTNAKTKKMLTFLKNAKLTEQKLLFVIDTISKPLLLSTNNLKQIVVKQFNKVSVRDLLLAKTIIIEKAAFTKLEERLK.

Positions 50–77 (STLTKGEVSGGGKKPYKQKHTGKARQGS) are disordered. Basic residues predominate over residues 63–72 (KPYKQKHTGK).

Belongs to the universal ribosomal protein uL4 family. In terms of assembly, part of the 50S ribosomal subunit.

Functionally, one of the primary rRNA binding proteins, this protein initially binds near the 5'-end of the 23S rRNA. It is important during the early stages of 50S assembly. It makes multiple contacts with different domains of the 23S rRNA in the assembled 50S subunit and ribosome. In terms of biological role, forms part of the polypeptide exit tunnel. The protein is Large ribosomal subunit protein uL4 of Mycoplasma genitalium (strain ATCC 33530 / DSM 19775 / NCTC 10195 / G37) (Mycoplasmoides genitalium).